The following is a 668-amino-acid chain: DNA ligase (668 aa).

NAD(+) is bound by residues 35 to 39, 84 to 85, and E115; these read DQEYD and SL. K117 acts as the N6-AMP-lysine intermediate in catalysis. NAD(+) is bound by residues R138, E172, K288, and K312. C406, C409, C425, and C430 together coordinate Zn(2+). Residues 589–668 form the BRCT domain; the sequence is KLEGPLKGLV…EEFFDKYGES (80 aa).

This sequence belongs to the NAD-dependent DNA ligase family. LigA subfamily. Requires Mg(2+) as cofactor. Mn(2+) is required as a cofactor.

The catalysed reaction is NAD(+) + (deoxyribonucleotide)n-3'-hydroxyl + 5'-phospho-(deoxyribonucleotide)m = (deoxyribonucleotide)n+m + AMP + beta-nicotinamide D-nucleotide.. Its function is as follows. DNA ligase that catalyzes the formation of phosphodiester linkages between 5'-phosphoryl and 3'-hydroxyl groups in double-stranded DNA using NAD as a coenzyme and as the energy source for the reaction. It is essential for DNA replication and repair of damaged DNA. This Petrotoga mobilis (strain DSM 10674 / SJ95) protein is DNA ligase.